The following is a 358-amino-acid chain: G-protein coupled receptor 62 (358 aa).

Over 1–17 (MANGSGLSVTELAGSVG) the chain is Extracellular. The N-linked (GlcNAc...) asparagine glycan is linked to N3. A helical transmembrane segment spans residues 18–38 (FILAVLVEVGAVLGNGTLLVV). Over 39–53 (VLRTPDLQDAFYLAH) the chain is Cytoplasmic. The helical transmembrane segment at 54–74 (LCVVDLLAAASIMPLGLLAAP) threads the bilayer. The Extracellular portion of the chain corresponds to 75–89 (PGLGTVPLDPSSCRA). A helical transmembrane segment spans residues 90–110 (ARFLSAALLPACTLGVAALGL). The Cytoplasmic portion of the chain corresponds to 111-128 (ARYRLIVHPLRPGARPAP). A helical membrane pass occupies residues 129 to 149 (ALVLTAVWSAAALLGALSLLG). The Extracellular portion of the chain corresponds to 150–176 (PPPAPPPAPARCSVLAGGLGPFRPLWA). The chain crosses the membrane as a helical span at residues 177–197 (MLAFALPALLLLAAYGSIFLV). Residues 198–234 (ARRAALRPPRGTRPRSDSLDSRLSFLPPLRPRLLGGK) are Cytoplasmic-facing. The helical transmembrane segment at 235 to 255 (AALAPALAVGQFAACWLPYGC) threads the bilayer. At 256–268 (ACLAPAARAAAAE) the chain is on the extracellular side. Residues 269–289 (ATVTWVAYSAFAAHPFLYGLL) form a helical membrane-spanning segment. Residues 290-358 (QRPVRLALGR…RQTPSVSEAT (69 aa)) lie on the Cytoplasmic side of the membrane. Residues 334–358 (VLGPSEAPEQARELARQTPSVSEAT) form a disordered region.

This sequence belongs to the G-protein coupled receptor 1 family. As to quaternary structure, homodimer. Forms heterodimer with MTNR1B. Interacts with ARRB1 and ARRB2 in a spontaneous and agonist-independent manner; leading to the internalization of GPR62 in the endosomal compartment. In terms of tissue distribution, expressed in the brain and testes. Expressed widely, in the brain, including the cerebral cortex, cerebellum, hippocampus,thalamus and pituitary gland. In the testes, expressed specifically in the germ cells.

The protein localises to the cell membrane. Its subcellular location is the endosome membrane. Orphan G-protein coupled receptor. Constitutively activates the G(q/11)/inositol phosphate and the G(s)-alpha/cAMP signaling pathways. Has spontaneous activity for beta-arrestin recruitment. Shows a reciprocal regulatory interaction with the melatonin receptor MTNR1B most likely through receptor heteromerization. In Mus musculus (Mouse), this protein is G-protein coupled receptor 62 (Gpr62).